The primary structure comprises 569 residues: Urease subunit beta (569 aa).

The Urease domain maps to 131 to 569; sequence GGIDTHIHFI…VSLGQLYCLF (439 aa). Residues histidine 136, histidine 138, and lysine 219 each coordinate Ni(2+). Position 219 is an N6-carboxylysine (lysine 219). Histidine 221 contacts substrate. 2 residues coordinate Ni(2+): histidine 248 and histidine 274. Histidine 322 acts as the Proton donor in catalysis. Position 362 (aspartate 362) interacts with Ni(2+).

Belongs to the metallo-dependent hydrolases superfamily. Urease alpha subunit family. In terms of assembly, heterohexamer of 3 UreA (alpha) and 3 UreB (beta) subunits. Ni cation is required as a cofactor. In terms of processing, carboxylation allows a single lysine to coordinate two nickel ions.

It is found in the cytoplasm. It catalyses the reaction urea + 2 H2O + H(+) = hydrogencarbonate + 2 NH4(+). The protein operates within nitrogen metabolism; urea degradation; CO(2) and NH(3) from urea (urease route): step 1/1. The polypeptide is Urease subunit beta (Helicobacter hepaticus (strain ATCC 51449 / 3B1)).